Reading from the N-terminus, the 350-residue chain is Serine-threonine kinase receptor-associated protein (350 aa).

WD repeat units lie at residues 12–56 (GHTR…GTFL), 57–96 (GHKG…ELMT), 98–137 (AHKH…AEPK), 141–179 (GHTS…EVKS), 180–212 (LNFN…HSAV), 221–262 (EAPA…ESYK), and 263–302 (GHFG…TYGL). 3 positions are modified to phosphoserine: S312, S335, and S338. The segment at 327 to 350 (EEELEEIASENSDSIYSSTPEVKA) is disordered. A compositionally biased stretch (polar residues) spans 337-350 (NSDSIYSSTPEVKA). Position 342 is a phosphotyrosine (Y342).

The protein belongs to the WD repeat STRAP family. As to quaternary structure, part of the core SMN complex that contains SMN1, GEMIN2/SIP1, DDX20/GEMIN3, GEMIN4, GEMIN5, GEMIN6, GEMIN7, GEMIN8 and STRAP/UNRIP. Part of the SMN-Sm complex that contains SMN1, GEMIN2/SIP1, DDX20/GEMIN3, GEMIN4, GEMIN5, GEMIN6, GEMIN7, GEMIN8, STRAP/UNRIP and the Sm proteins SNRPB, SNRPD1, SNRPD2, SNRPD3, SNRPE, SNRPF and SNRPG. Interacts directly with GEMIN6 and GEMIN7. Associates with the SMN complex in the cytoplasm but not in the nucleus. Also interacts with CSDE1/UNR and MAWBP. Interacts with PDPK1. Interacts with TRIM48.

It is found in the cytoplasm. The protein localises to the nucleus. The SMN complex catalyzes the assembly of small nuclear ribonucleoproteins (snRNPs), the building blocks of the spliceosome, and thereby plays an important role in the splicing of cellular pre-mRNAs. Most spliceosomal snRNPs contain a common set of Sm proteins SNRPB, SNRPD1, SNRPD2, SNRPD3, SNRPE, SNRPF and SNRPG that assemble in a heptameric protein ring on the Sm site of the small nuclear RNA to form the core snRNP (Sm core). In the cytosol, the Sm proteins SNRPD1, SNRPD2, SNRPE, SNRPF and SNRPG are trapped in an inactive 6S pICln-Sm complex by the chaperone CLNS1A that controls the assembly of the core snRNP. To assemble core snRNPs, the SMN complex accepts the trapped 5Sm proteins from CLNS1A forming an intermediate. Binding of snRNA inside 5Sm triggers eviction of the SMN complex, thereby allowing binding of SNRPD3 and SNRPB to complete assembly of the core snRNP. STRAP plays a role in the cellular distribution of the SMN complex. Negatively regulates TGF-beta signaling but positively regulates the PDPK1 kinase activity by enhancing its autophosphorylation and by significantly reducing the association of PDPK1 with 14-3-3 protein. In Bos taurus (Bovine), this protein is Serine-threonine kinase receptor-associated protein (STRAP).